A 221-amino-acid polypeptide reads, in one-letter code: Probable glutathione S-transferase (221 aa).

The GST N-terminal domain occupies 4-83 (EEVILLDFWP…YIEEVWKDKA (80 aa)). Glutathione-binding positions include Ser14, Lys41, Ile55, and 67-68 (ES). Residues 90-214 (DPYDRAQARF…PKVLEFVKVL (125 aa)) form the GST C-terminal domain.

The protein belongs to the GST superfamily. HSP26 family. Root tip-specific expression.

The catalysed reaction is RX + glutathione = an S-substituted glutathione + a halide anion + H(+). In Nicotiana tabacum (Common tobacco), this protein is Probable glutathione S-transferase.